Here is a 421-residue protein sequence, read N- to C-terminus: E3 ubiquitin-protein ligase RMD5 (421 aa).

Residues 176–236 (EFIEMGQIVH…QIVKHGNPVE (61 aa)) form the CTLH domain. The RING-Gid-type zinc finger occupies 361–404 (CPVLKEETTTENPPYSLACHHIISKKALDRLSKNGTITFKCPYC).

The protein belongs to the RMD5/GID2 family. In terms of assembly, identified in the GID/CTLH complex. In the absence of stress, the complex exists as an inactive anticipatory complex (GID(Ant)), composed of VID30/GID1, the E3 ubiquitin-ligase RMD5/GID2, VID28/GID5, GID8, and the RING-like subunit FYV10/GID9, awaiting a substrate receptor to form the active E3 ligase complex. When cells are shifted to glucose-containing medium, the substrate receptor VID24/GID4 is induced and becomes part of the complex, named GID(SR4). Additionally, GID7 transforms the GID(SR4) E3 ligase core into a higher-order supramolecular assembly (Chelator-GID(SR4)) specifically tailored for FBP1 ubiquitination. Under osmotic or heat stress, the substrate receptor GID10 is induced and becomes part of the complex, named GID(SR10). Within the GID complex, interacts directly with GID8, FYV10/GID9 and VID28/GID5.

Its subcellular location is the cytoplasm. It catalyses the reaction S-ubiquitinyl-[E2 ubiquitin-conjugating enzyme]-L-cysteine + [acceptor protein]-L-lysine = [E2 ubiquitin-conjugating enzyme]-L-cysteine + N(6)-ubiquitinyl-[acceptor protein]-L-lysine.. It functions in the pathway protein modification; protein ubiquitination. E3 ubiquitin-protein ligase component of the GID E3 ligase complex recruiting N termini and catalyzing ubiquitination of proteins targeted for degradation. GID E3 is regulated through assembly with interchangeable N-degron-binding substrate receptors induced by distinct environmental perturbations. Required for the adaptation to the presence of glucose in the growth medium; mediates in association with the substrate receptor VID24/GID4 the degradation of enzymes involved in gluconeogenesis when cells are shifted to glucose-containing medium. Required for proteasome-dependent catabolite degradation of fructose-1,6-bisphosphatase (FBP1), malate dehydrogenase (MDH2), and other gluconeogenic enzymes. The sequence is that of E3 ubiquitin-protein ligase RMD5 from Saccharomyces cerevisiae (strain ATCC 204508 / S288c) (Baker's yeast).